A 398-amino-acid chain; its full sequence is MEPGLLRPAPVSEVIVLHYNYTGKLRGARYQPGAGLRADAVVCLAVCALIVLENLAVLVVLGRHPRFHAPMFLLLGSLTLSDLLAGAAYAANILLSGPLTLRLSPALWFAREGGVFVALAASVLSLLAIALERLLTMERRGPAPAARRGRTLALAAGAWGVSLLLGLLPALGWNCLGRLEACSTVLPLYAKAYVLFCVLAFVGILAAICGLYARIYCQVRAKAQRLRARPGAGEGTSARARGTPRSLALLRTLSVVLVAFVACWGPLFLLLLLDVACPARACPVLLQADPFLGLAMANSLLNPIIYTFTNRDLRHALLRLICCGRRPCWGGSGTSRSPGSTLGASGGLHRWLPPGMDRSSSRSERSSPQRDGLDTSGSTGSPAAPTAAQTLVPPPAAD.

At 1-40 (MEPGLLRPAPVSEVIVLHYNYTGKLRGARYQPGAGLRADA) the chain is on the extracellular side. N-linked (GlcNAc...) asparagine glycosylation is present at asparagine 20. The helical transmembrane segment at 41 to 61 (VVCLAVCALIVLENLAVLVVL) threads the bilayer. The Cytoplasmic segment spans residues 62–70 (GRHPRFHAP). Residues 71–91 (MFLLLGSLTLSDLLAGAAYAA) traverse the membrane as a helical segment. Residues 92–111 (NILLSGPLTLRLSPALWFAR) are Extracellular-facing. A helical transmembrane segment spans residues 112-132 (EGGVFVALAASVLSLLAIALE). Residues 133-151 (RLLTMERRGPAPAARRGRT) lie on the Cytoplasmic side of the membrane. A helical transmembrane segment spans residues 152-172 (LALAAGAWGVSLLLGLLPALG). Topologically, residues 173–191 (WNCLGRLEACSTVLPLYAK) are extracellular. The chain crosses the membrane as a helical span at residues 192–212 (AYVLFCVLAFVGILAAICGLY). At 213 to 252 (ARIYCQVRAKAQRLRARPGAGEGTSARARGTPRSLALLRT) the chain is on the cytoplasmic side. Residues 253 to 273 (LSVVLVAFVACWGPLFLLLLL) form a helical membrane-spanning segment. The Extracellular portion of the chain corresponds to 274–287 (DVACPARACPVLLQ). The helical transmembrane segment at 288 to 308 (ADPFLGLAMANSLLNPIIYTF) threads the bilayer. Topologically, residues 309–398 (TNRDLRHALL…QTLVPPPAAD (90 aa)) are cytoplasmic. Residue cysteine 323 is the site of S-palmitoyl cysteine attachment. Residues 332 to 398 (SGTSRSPGST…QTLVPPPAAD (67 aa)) form a disordered region. Residues 334-343 (TSRSPGSTLG) are compositionally biased toward low complexity. At serine 337 the chain carries Phosphoserine. Basic and acidic residues predominate over residues 359-373 (SSSRSERSSPQRDGL). Serine 381 bears the Phosphoserine mark.

The protein belongs to the G-protein coupled receptor 1 family.

Its subcellular location is the cell membrane. Its function is as follows. Receptor for the lysosphingolipid sphingosine 1-phosphate (S1P). S1P is a bioactive lysophospholipid that elicits diverse physiological effect on most types of cells and tissues. Is coupled to both the G(i/O)alpha and G(12) subclass of heteromeric G-proteins. The chain is Sphingosine 1-phosphate receptor 5 (S1PR5) from Sus scrofa (Pig).